Reading from the N-terminus, the 183-residue chain is ATP synthase subunit b, chloroplastic (183 aa).

Residues Ile-33–Leu-51 form a helical membrane-spanning segment.

The protein belongs to the ATPase B chain family. In terms of assembly, F-type ATPases have 2 components, F(1) - the catalytic core - and F(0) - the membrane proton channel. F(1) has five subunits: alpha(3), beta(3), gamma(1), delta(1), epsilon(1). F(0) has four main subunits: a(1), b(1), b'(1) and c(10-14). The alpha and beta chains form an alternating ring which encloses part of the gamma chain. F(1) is attached to F(0) by a central stalk formed by the gamma and epsilon chains, while a peripheral stalk is formed by the delta, b and b' chains.

It localises to the plastid. It is found in the chloroplast thylakoid membrane. F(1)F(0) ATP synthase produces ATP from ADP in the presence of a proton or sodium gradient. F-type ATPases consist of two structural domains, F(1) containing the extramembraneous catalytic core and F(0) containing the membrane proton channel, linked together by a central stalk and a peripheral stalk. During catalysis, ATP synthesis in the catalytic domain of F(1) is coupled via a rotary mechanism of the central stalk subunits to proton translocation. Functionally, component of the F(0) channel, it forms part of the peripheral stalk, linking F(1) to F(0). The chain is ATP synthase subunit b, chloroplastic from Oltmannsiellopsis viridis (Marine flagellate).